Reading from the N-terminus, the 571-residue chain is Dihydroxy-acid dehydratase (571 aa).

Cys56 lines the [2Fe-2S] cluster pocket. Asp88 provides a ligand contact to Mg(2+). Cys129 serves as a coordination point for [2Fe-2S] cluster. Mg(2+) contacts are provided by Asp130 and Lys131. At Lys131 the chain carries N6-carboxylysine. Cys201 is a binding site for [2Fe-2S] cluster. Glu452 is a binding site for Mg(2+). Ser478 serves as the catalytic Proton acceptor.

It belongs to the IlvD/Edd family. As to quaternary structure, homodimer. It depends on [2Fe-2S] cluster as a cofactor. Requires Mg(2+) as cofactor.

The catalysed reaction is (2R)-2,3-dihydroxy-3-methylbutanoate = 3-methyl-2-oxobutanoate + H2O. The enzyme catalyses (2R,3R)-2,3-dihydroxy-3-methylpentanoate = (S)-3-methyl-2-oxopentanoate + H2O. The protein operates within amino-acid biosynthesis; L-isoleucine biosynthesis; L-isoleucine from 2-oxobutanoate: step 3/4. It participates in amino-acid biosynthesis; L-valine biosynthesis; L-valine from pyruvate: step 3/4. In terms of biological role, functions in the biosynthesis of branched-chain amino acids. Catalyzes the dehydration of (2R,3R)-2,3-dihydroxy-3-methylpentanoate (2,3-dihydroxy-3-methylvalerate) into 2-oxo-3-methylpentanoate (2-oxo-3-methylvalerate) and of (2R)-2,3-dihydroxy-3-methylbutanoate (2,3-dihydroxyisovalerate) into 2-oxo-3-methylbutanoate (2-oxoisovalerate), the penultimate precursor to L-isoleucine and L-valine, respectively. This Streptococcus suis (strain 98HAH33) protein is Dihydroxy-acid dehydratase.